A 228-amino-acid chain; its full sequence is uncharacterized protein (228 aa).

The protein localises to the mitochondrion. This is an uncharacterized protein from Emericella nidulans (Aspergillus nidulans).